A 658-amino-acid polypeptide reads, in one-letter code: Protein kinase and PP2C-like domain-containing protein (658 aa).

The Protein kinase domain maps to 30 to 314; the sequence is FTLLSPIAKG…DNVVLELESI (285 aa). ATP contacts are provided by residues 36-44 and lysine 57; that span reads IAKGSESVV. Catalysis depends on aspartate 149, which acts as the Proton acceptor. The PPM-type phosphatase domain maps to 392-648; it reads SCGSFATCGR…DNITVIVVFL (257 aa). Aspartate 428, glycine 429, aspartate 599, and aspartate 639 together coordinate Mn(2+).

The protein in the N-terminal section; belongs to the protein kinase superfamily. Ser/Thr protein kinase family. It in the C-terminal section; belongs to the PP2C family. It depends on Mg(2+) as a cofactor. Requires Mn(2+) as cofactor.

It carries out the reaction L-seryl-[protein] + ATP = O-phospho-L-seryl-[protein] + ADP + H(+). The enzyme catalyses L-threonyl-[protein] + ATP = O-phospho-L-threonyl-[protein] + ADP + H(+). It catalyses the reaction O-phospho-L-seryl-[protein] + H2O = L-seryl-[protein] + phosphate. The catalysed reaction is O-phospho-L-threonyl-[protein] + H2O = L-threonyl-[protein] + phosphate. The protein is Protein kinase and PP2C-like domain-containing protein of Arabidopsis thaliana (Mouse-ear cress).